Here is a 722-residue protein sequence, read N- to C-terminus: Dipeptidyl aminopeptidase BII (722 aa).

An N-terminal signal peptide occupies residues 1 to 24 (MRPNLLAAAIAVPLSLLAAQIAQA). 2 disulfide bridges follow: Cys-70-Cys-87 and Cys-166-Cys-174. The active-site Charge relay system is His-86. A substrate-binding site is contributed by 215–216 (NW). Asp-224 serves as the catalytic Charge relay system. Residues Asn-330, 655–657 (GNS), and 673–674 (FD) each bind substrate. Ser-657 serves as the catalytic Charge relay system.

The protein belongs to the peptidase S46 family. In terms of assembly, homodimer.

With respect to regulation, completely inhibited by the serine protease inhibitor diisopropyl fluorophosphate (DFP) and potently inhibited by 0.5 mM ZnCl(2), 10 mM o-phenanthlorine, phenylmethanesulfonyl fluoride (PMSF) and N-tosyl-L-phenyl-alanyl chloromethyl ketone (TPCK), but not by N-tosyl-L-lysyl chloromethyl ketone (TLCK). Activity is not affected significantly by protease inhibitors, such as chymostatin, leupeptin, N-ethylmaleimide (NEM), iodoacetate (IAA), L-trans-epoxysuccinyl-leucylamido(4-guanido)butane (E64) and pepstatin A or by CoCl(2), CaCl(2) and EDTA. Functionally, exopeptidase that catalyzes the removal of dipeptide units (NH2-P2-P1-) from the free amino termini of oligopeptides and small proteins. Peptide digestion is sequential and substrate recognition is non-specific, with the exception that Pro is not suitable as a P1 residue. Removes many residues of bioactive oligopeptides such as angiotensin I and neuromedin N and also cleaves oxidized insulin B chain. Able to hydrolyze an X-Pro bond, an imido bond. No endopeptidase activity. May play a physiological role in feeding. This chain is Dipeptidyl aminopeptidase BII, found in Pseudoxanthomonas mexicana.